Reading from the N-terminus, the 69-residue chain is MNSDIISGKWTQLKGKAQAKWGDLTDDDFKVAEGNAEYLQGKLQERYGWDRDRAQTEVRAFEKSLRDDT.

It belongs to the UPF0337 (CsbD) family.

This chain is UPF0337 protein XAC4007, found in Xanthomonas axonopodis pv. citri (strain 306).